The following is a 438-amino-acid chain: V-type ATP synthase beta chain (438 aa).

Belongs to the ATPase alpha/beta chains family.

Functionally, produces ATP from ADP in the presence of a proton gradient across the membrane. The V-type beta chain is a regulatory subunit. This Chlamydia trachomatis serovar A (strain ATCC VR-571B / DSM 19440 / HAR-13) protein is V-type ATP synthase beta chain.